A 38-amino-acid chain; its full sequence is Histatin-1 (38 aa).

A disordered region spans residues Asp-1–Asn-38. The residue at position 2 (Ser-2) is a Phosphoserine. Residues His-8–Tyr-30 show a composition bias toward basic residues.

The protein belongs to the histatin/statherin family.

The protein localises to the secreted. Histatins (Hsts) are cationic and histidine-rich secreted peptides mainly synthesized by saliva glands of humans and higher primates. Hsts are considered to be major precursors of the protective proteinaceous structure on tooth surfaces (enamel pellicle). The chain is Histatin-1 (HTN1) from Macaca fascicularis (Crab-eating macaque).